A 332-amino-acid chain; its full sequence is Fructose-1,6-bisphosphatase class 1 (332 aa).

Residues E89, D110, L112, and D113 each coordinate Mg(2+). Substrate contacts are provided by residues 113–116 (DGSS), N206, Y239, 257–259 (YLY), and K269. E275 contributes to the Mg(2+) binding site.

It belongs to the FBPase class 1 family. Homotetramer. Requires Mg(2+) as cofactor.

Its subcellular location is the cytoplasm. The enzyme catalyses beta-D-fructose 1,6-bisphosphate + H2O = beta-D-fructose 6-phosphate + phosphate. The protein operates within carbohydrate biosynthesis; gluconeogenesis. The sequence is that of Fructose-1,6-bisphosphatase class 1 from Escherichia coli (strain ATCC 8739 / DSM 1576 / NBRC 3972 / NCIMB 8545 / WDCM 00012 / Crooks).